The following is a 122-amino-acid chain: Neuropeptide B (122 aa).

A signal peptide spans 1-24 (MAGPAMLVAAALALCLLLASPGLA). At tryptophan 25 the chain carries 6'-bromotryptophan. Positions 56–122 (SEPRGGTRSL…LSLSASDCRK (67 aa)) are excised as a propeptide.

The protein belongs to the neuropeptide B/W family.

Its subcellular location is the secreted. Its function is as follows. May be involved in the regulation of feeding, neuroendocrine system, memory, learning and in the afferent pain pathway. This Bos taurus (Bovine) protein is Neuropeptide B (NPB).